A 157-amino-acid polypeptide reads, in one-letter code: MASGDFRLCDVVLDDSIGRSTPDVEHERAVAIFDLIEENTFEPAGHDGGPYRLHISLVDAKLVFAIKTEDDKDVSTHILSLTPFRRIIKDYFLICESYYEAIRSSTPSQIEAIDMGRRGIHNDGSQTLMDRLSGKIKVDFDTARRLFTLVCVLYWRG.

It belongs to the UPF0262 family.

This Agrobacterium fabrum (strain C58 / ATCC 33970) (Agrobacterium tumefaciens (strain C58)) protein is UPF0262 protein Atu0536.